The chain runs to 331 residues: ABSCISIC ACID-INSENSITIVE 5-like protein 1 (331 aa).

Phosphoserine is present on residues S40 and S98. Position 143 is a phosphothreonine (T143). Residues 247–310 (MERRQRRMIK…RQEIISRSKQ (64 aa)) form the bZIP domain. A basic motif region spans residues 249-268 (RRQRRMIKNRESAARSRARR). The leucine-zipper stretch occupies residues 275–289 (LELELNNLTEENTKL). The span at 296–320 (NEKKRRQEIISRSKQVTKEKSGDKL) shows a compositional bias: basic and acidic residues. The tract at residues 296–331 (NEKKRRQEIISRSKQVTKEKSGDKLRKIRRMASAGW) is disordered.

Belongs to the bZIP family. ABI5 subfamily. As to quaternary structure, DNA-binding heterodimer with AREB3/DPBF3 or EEL/DPBF4. Interacts with the AFP proteins AFP1, AFP2 and AFP3. Predominantly expressed in seeds.

It localises to the nucleus. In terms of biological role, could participate in abscisic acid-regulated gene expression during seed development. The sequence is that of ABSCISIC ACID-INSENSITIVE 5-like protein 1 (DPBF2) from Arabidopsis thaliana (Mouse-ear cress).